A 239-amino-acid polypeptide reads, in one-letter code: Lectin (239 aa).

N-linked (GlcNAc...) asparagine glycans are attached at residues N17 and N113.

This sequence belongs to the leguminous lectin family. As to quaternary structure, homodimer.

Its function is as follows. Galactose and N-acetyllactosamine specific lectin. The protein is Lectin of Erythrina crista-galli (Cockspur coral tree).